A 282-amino-acid chain; its full sequence is Undecaprenyl-diphosphatase (282 aa).

Transmembrane regions (helical) follow at residues 90-110 (YRLGWYVIIGTIPICILGLFF), 121-141 (LWVVVTALVVFSGVIALAEYV), 194-214 (FGFLLAIPAVFASGLFSLPDA), 228-248 (QLLVATLIAFVLGLTAVAWLL), and 256-276 (MYWFVGYRVLVGTGMLVLLAT).

This sequence belongs to the UppP family.

It is found in the cell membrane. The catalysed reaction is di-trans,octa-cis-undecaprenyl diphosphate + H2O = di-trans,octa-cis-undecaprenyl phosphate + phosphate + H(+). Catalyzes the dephosphorylation of undecaprenyl diphosphate (UPP). Confers resistance to bacitracin. The chain is Undecaprenyl-diphosphatase from Mycobacterium tuberculosis (strain ATCC 25618 / H37Rv).